The primary structure comprises 123 residues: Undecaprenol kinase (123 aa).

The Cytoplasmic segment spans residues 1–33 (MDSKDHRNELNRFFKSFVHAGRGIWETARTERN). Residues 34 to 51 (FQFHAAAACAVLICGFLV) form a helical membrane-spanning segment. Residues 52 to 57 (ELSIIE) are Extracellular-facing. The helical transmembrane segment at 58–74 (WMIIFLLIGGMFSLELL) threads the bilayer. At 75–99 (NTAIEHTVDLITDKHHPLAKAAKDA) the chain is on the cytoplasmic side. The chain crosses the membrane as a helical span at residues 100-120 (AAGAVCVFAVISCIIGLLIFL). The Extracellular portion of the chain corresponds to 121–123 (PKL).

This sequence belongs to the bacterial diacylglycerol kinase family.

It localises to the cell membrane. It catalyses the reaction di-trans,octa-cis-undecaprenol + ATP = di-trans,octa-cis-undecaprenyl phosphate + ADP + H(+). Its function is as follows. Catalyzes the phosphorylation of undecaprenol in vitro, which is probably the physiological substrate. Exhibits no detectable activity against other substrates such as monoacylglycerol, ceramide, or diacylglycerol (DAG). Appears indispensable for the maintenance of spore stability and viability in B.subtilis. This Bacillus subtilis (strain 168) protein is Undecaprenol kinase (dgkA).